The primary structure comprises 384 residues: Alkanesulfonate monooxygenase (384 aa).

Belongs to the SsuD family.

The enzyme catalyses an alkanesulfonate + FMNH2 + O2 = an aldehyde + FMN + sulfite + H2O + 2 H(+). Catalyzes the desulfonation of aliphatic sulfonates. This is Alkanesulfonate monooxygenase from Burkholderia thailandensis (strain ATCC 700388 / DSM 13276 / CCUG 48851 / CIP 106301 / E264).